Consider the following 591-residue polypeptide: V-type ATP synthase alpha chain (591 aa).

ATP is bound at residue 242–249 (GPFGAGKT).

The protein belongs to the ATPase alpha/beta chains family.

The enzyme catalyses ATP + H2O + 4 H(+)(in) = ADP + phosphate + 5 H(+)(out). Its function is as follows. Produces ATP from ADP in the presence of a proton gradient across the membrane. The V-type alpha chain is a catalytic subunit. In Chlamydia pneumoniae (Chlamydophila pneumoniae), this protein is V-type ATP synthase alpha chain (atpA).